The chain runs to 208 residues: Na(+)-translocating NADH-quinone reductase subunit D (208 aa).

The next 5 helical transmembrane spans lie at 42-62 (FVMA…VSLI), 72-92 (IIVQ…ILKA), 103-123 (VFVG…AFAM), 131-151 (FVDG…VAFF), and 178-198 (NGLF…IWGL).

Belongs to the NqrDE/RnfAE family. As to quaternary structure, composed of six subunits; NqrA, NqrB, NqrC, NqrD, NqrE and NqrF.

The protein localises to the cell inner membrane. The catalysed reaction is a ubiquinone + n Na(+)(in) + NADH + H(+) = a ubiquinol + n Na(+)(out) + NAD(+). In terms of biological role, NQR complex catalyzes the reduction of ubiquinone-1 to ubiquinol by two successive reactions, coupled with the transport of Na(+) ions from the cytoplasm to the periplasm. NqrA to NqrE are probably involved in the second step, the conversion of ubisemiquinone to ubiquinol. This Haemophilus influenzae (strain 86-028NP) protein is Na(+)-translocating NADH-quinone reductase subunit D.